Here is a 113-residue protein sequence, read N- to C-terminus: Urease subunit beta (113 aa).

The protein belongs to the urease beta subunit family. Heterotrimer of UreA (gamma), UreB (beta) and UreC (alpha) subunits. Three heterotrimers associate to form the active enzyme.

The protein resides in the cytoplasm. The enzyme catalyses urea + 2 H2O + H(+) = hydrogencarbonate + 2 NH4(+). The protein operates within nitrogen metabolism; urea degradation; CO(2) and NH(3) from urea (urease route): step 1/1. The protein is Urease subunit beta of Nitrosospira multiformis (strain ATCC 25196 / NCIMB 11849 / C 71).